We begin with the raw amino-acid sequence, 507 residues long: ATP synthase subunit alpha, mitochondrial (507 aa).

171–178 (GDRQTGKT) contacts ATP.

The protein belongs to the ATPase alpha/beta chains family. In terms of assembly, F-type ATPases have 2 components, CF(1) - the catalytic core - and CF(0) - the membrane proton channel. CF(1) has five subunits: alpha(3), beta(3), gamma(1), delta(1), epsilon(1). CF(0) has three main subunits: a, b and c.

Its subcellular location is the mitochondrion. The protein resides in the mitochondrion inner membrane. Its function is as follows. Mitochondrial membrane ATP synthase (F(1)F(0) ATP synthase or Complex V) produces ATP from ADP in the presence of a proton gradient across the membrane which is generated by electron transport complexes of the respiratory chain. F-type ATPases consist of two structural domains, F(1) - containing the extramembraneous catalytic core, and F(0) - containing the membrane proton channel, linked together by a central stalk and a peripheral stalk. During catalysis, ATP synthesis in the catalytic domain of F(1) is coupled via a rotary mechanism of the central stalk subunits to proton translocation. Subunits alpha and beta form the catalytic core in F(1). Rotation of the central stalk against the surrounding alpha(3)beta(3) subunits leads to hydrolysis of ATP in three separate catalytic sites on the beta subunits. Subunit alpha does not bear the catalytic high-affinity ATP-binding sites. This Raphanus sativus (Radish) protein is ATP synthase subunit alpha, mitochondrial (ATPA).